The sequence spans 193 residues: Crossover junction endodeoxyribonuclease RuvC (193 aa).

Active-site residues include Asp-7, Glu-68, and Asp-141. Residues Asp-7, Glu-68, and Asp-141 each coordinate Mg(2+).

It belongs to the RuvC family. In terms of assembly, homodimer which binds Holliday junction (HJ) DNA. The HJ becomes 2-fold symmetrical on binding to RuvC with unstacked arms; it has a different conformation from HJ DNA in complex with RuvA. In the full resolvosome a probable DNA-RuvA(4)-RuvB(12)-RuvC(2) complex forms which resolves the HJ. It depends on Mg(2+) as a cofactor.

It is found in the cytoplasm. The catalysed reaction is Endonucleolytic cleavage at a junction such as a reciprocal single-stranded crossover between two homologous DNA duplexes (Holliday junction).. In terms of biological role, the RuvA-RuvB-RuvC complex processes Holliday junction (HJ) DNA during genetic recombination and DNA repair. Endonuclease that resolves HJ intermediates. Cleaves cruciform DNA by making single-stranded nicks across the HJ at symmetrical positions within the homologous arms, yielding a 5'-phosphate and a 3'-hydroxyl group; requires a central core of homology in the junction. The consensus cleavage sequence is 5'-(A/T)TT(C/G)-3'. Cleavage occurs on the 3'-side of the TT dinucleotide at the point of strand exchange. HJ branch migration catalyzed by RuvA-RuvB allows RuvC to scan DNA until it finds its consensus sequence, where it cleaves and resolves the cruciform DNA. This is Crossover junction endodeoxyribonuclease RuvC from Bifidobacterium adolescentis (strain ATCC 15703 / DSM 20083 / NCTC 11814 / E194a).